A 214-amino-acid chain; its full sequence is Glycine-rich protein 2 (214 aa).

Positions 8–75 (RAKGTVKWFS…RTKAVDVTGP (68 aa)) constitute a CSD domain. A disordered region spans residues 54–91 (TVEFEVESGGDGRTKAVDVTGPDGAAVQGGRGGGGGGG). Residues 80–91 (VQGGRGGGGGGG) are compositionally biased toward gly residues. 2 CCHC-type zinc fingers span residues 157–174 (SGCF…DCSQ) and 194–211 (GGCY…ECTS).

The chain is Glycine-rich protein 2 (GRP-2) from Nicotiana sylvestris (Wood tobacco).